The primary structure comprises 529 residues: CRISPR-associated endodeoxyribonuclease Cas12f1 (529 aa).

Positions 1–95 (MAKNTITKTL…RGQFPDAVFW (95 aa)) are zinc finger domain (ZF). Zn(2+) is bound by residues C50, H53, C69, and C72. Residues 96–192 (QEISEIFRQL…PTTKSDNFPI (97 aa)) are recognition domain (REC). Residues 193–312 (PLVKQKGGQY…MLNLSIDVPK (120 aa)) form a wedge domain (WED) region. The linker stretch occupies residues 313–321 (IDKGVDPSI). The segment at 322–473 (IGGIDVGVKS…RKVAPNNTSK (152 aa)) is ruvC-I. Active-site residues include D326 and E422. A target nucleic acid-binding (TNB) region spans residues 474–508 (TCSKCGHLNNYFNFEYRKKNKFPHFKCEKCNFKEN). Residues C475 and C478 each coordinate Zn(2+). R490 is an active-site residue. Zn(2+) is bound by residues C500 and C503. The ruvC-II stretch occupies residues 509–529 (ADYNAALNISNPKLKSTKEEP). The active site involves D510.

Belongs to the CRISPR-associated endonuclease Cas12f family. As to quaternary structure, an asymmetric homodimer. Guide RNA is probably required for dimerization. Mg(2+) serves as cofactor. Zn(2+) is required as a cofactor.

Target ssDNA cleavage is inhibited by EDTA. Activity is maximal with 5-50 mM NaCl, is less efficient at higher NaCl concentrations. Its function is as follows. CRISPR (clustered regularly interspaced short palindromic repeat), is an adaptive immune system that provides protection against mobile genetic elements (viruses, transposable elements and conjugative plasmids). CRISPR clusters contain sequences complementary to antecedent mobile elements and target invading nucleic acids. CRISPR clusters are transcribed and processed into CRISPR RNA (crRNA), which requires a trans-encoded small RNA (tracrRNA), but not this protein (in vitro). Upon expression in E.coli of this protein, a mini CRISPR array and the probable tracrRNA, the protein associates with both RNAs. The mini system is not active in E.coli against phiX174 phage, nor is it active in protection against transformation by foreign plasmids. In vitro the purified protein-tracrRNA-crRNA complex cleaves ssDNA complementary to the crRNA; target cleavage requires both tracrRNA and crRNA, but not a protospacer adjacent motif (PAM). The tracrRNA-crRNA can be replaced by a single guide RNA (sgRNA). 2-nucleotide mismatches in the middle of the crRNA:DNA heteroduplex decrease cleavage. Cleavage occurs just downstream of the heteroduplex. Activation of this protein results in non-specific ssDNA degradation in vitro. In vitro and in E.coli (coexpressed with sgRNA) has dsDNA endonuclease activity, recognizing the 5' PAM sequence TTTR; both sgRNA and a PAM are required for activity. Cleaves the target strand 24 and the nontarget strand 22 bases upstream of the PAM (respectively), resulting in 5' overhangs. The 2 monomers interact differently with the sgRNA and target DNA. Mutagenesis of a dimeric construct shows that one of the RuvC monomers probably cleaves both DNA strands. This is CRISPR-associated endodeoxyribonuclease Cas12f1 from Uncultured archaeon.